We begin with the raw amino-acid sequence, 312 residues long: Aspartate carbamoyltransferase catalytic subunit (312 aa).

Residues Arg-57 and Thr-58 each contribute to the carbamoyl phosphate site. Lys-85 serves as a coordination point for L-aspartate. Carbamoyl phosphate contacts are provided by Arg-107, His-135, and Gln-138. L-aspartate-binding residues include Arg-168 and Arg-222. 2 residues coordinate carbamoyl phosphate: Gly-264 and Pro-265.

It belongs to the aspartate/ornithine carbamoyltransferase superfamily. ATCase family. As to quaternary structure, heterododecamer (2C3:3R2) of six catalytic PyrB chains organized as two trimers (C3), and six regulatory PyrI chains organized as three dimers (R2).

It catalyses the reaction carbamoyl phosphate + L-aspartate = N-carbamoyl-L-aspartate + phosphate + H(+). It functions in the pathway pyrimidine metabolism; UMP biosynthesis via de novo pathway; (S)-dihydroorotate from bicarbonate: step 2/3. Functionally, catalyzes the condensation of carbamoyl phosphate and aspartate to form carbamoyl aspartate and inorganic phosphate, the committed step in the de novo pyrimidine nucleotide biosynthesis pathway. The sequence is that of Aspartate carbamoyltransferase catalytic subunit from Carboxydothermus hydrogenoformans (strain ATCC BAA-161 / DSM 6008 / Z-2901).